The chain runs to 300 residues: MKTGNQFNTVALVGRSNTPGIAEPLATLADSIATLGFEVVFEGDTAREIGIAGYPALTPAEIGARADVAIVLGGDGTMLGIGRQLAPYRTPLIGINHGRLGFITDIAASDMQALVPVMLAGKFEREERSLLEARIVRDGEPIYHALAFNDVVVNRSGFSGMVELRASVDGRYMYNQRSDGLIVATPTGSTAYALSSAGPILHPQLAGIVLVPIAPHALSNRPIVLPDDSKIAIQIVGGRDVNVNFDMQSFTSLELNDTIEVRRSKHTVPFLHPIGYSYYTTLRKKLHWNEHASNEDDKAS.

Asp-75 (proton acceptor) is an active-site residue. NAD(+) contacts are provided by residues 75–76 (DG), 149–150 (ND), Arg-177, Asp-179, 190–195 (TAYALS), Ala-214, and Gln-248.

The protein belongs to the NAD kinase family. Requires a divalent metal cation as cofactor.

It is found in the cytoplasm. The enzyme catalyses NAD(+) + ATP = ADP + NADP(+) + H(+). Its function is as follows. Involved in the regulation of the intracellular balance of NAD and NADP, and is a key enzyme in the biosynthesis of NADP. Catalyzes specifically the phosphorylation on 2'-hydroxyl of the adenosine moiety of NAD to yield NADP. This Burkholderia cenocepacia (strain ATCC BAA-245 / DSM 16553 / LMG 16656 / NCTC 13227 / J2315 / CF5610) (Burkholderia cepacia (strain J2315)) protein is NAD kinase.